Consider the following 197-residue polypeptide: Protein GrpE (197 aa).

The segment covering 1-27 has biased composition (basic and acidic residues); sequence MTKQEKAENQEKPTEETVEETPKKETP. The disordered stretch occupies residues 1 to 50; the sequence is MTKQEKAENQEKPTEETVEETPKKETPFEPVMEADEVEETTEAQAPVEEA. Positions 32-41 are enriched in acidic residues; it reads MEADEVEETT.

This sequence belongs to the GrpE family. As to quaternary structure, homodimer.

Its subcellular location is the cytoplasm. In terms of biological role, participates actively in the response to hyperosmotic and heat shock by preventing the aggregation of stress-denatured proteins, in association with DnaK and GrpE. It is the nucleotide exchange factor for DnaK and may function as a thermosensor. Unfolded proteins bind initially to DnaJ; upon interaction with the DnaJ-bound protein, DnaK hydrolyzes its bound ATP, resulting in the formation of a stable complex. GrpE releases ADP from DnaK; ATP binding to DnaK triggers the release of the substrate protein, thus completing the reaction cycle. Several rounds of ATP-dependent interactions between DnaJ, DnaK and GrpE are required for fully efficient folding. This Latilactobacillus sakei (Lactobacillus sakei) protein is Protein GrpE.